Consider the following 89-residue polypeptide: Small ribosomal subunit protein uS14 (89 aa).

It belongs to the universal ribosomal protein uS14 family. Part of the 30S ribosomal subunit. Contacts proteins S3 and S10.

Functionally, binds 16S rRNA, required for the assembly of 30S particles and may also be responsible for determining the conformation of the 16S rRNA at the A site. The polypeptide is Small ribosomal subunit protein uS14 (Latilactobacillus sakei subsp. sakei (strain 23K) (Lactobacillus sakei subsp. sakei)).